Consider the following 215-residue polypeptide: MKTKFYDYQGEHLILYFAGWGTPPDAVNHLILPENHDLLICYDYQDLNLDFDLSAYRHIRLVAWSMGVWVAERVLQGIRLKSATAVNGTGLPCDDSFGIPYAIFKGTLENLTENTRLKFERRICGDKASFERYQLFPARPFDEIHQELTALFAMIQQDKRIDLIHWANAWVSSRDKIFTPANQHQYWALRCAVQEIEGEHYVFSRFTHWSALWDH.

This is an uncharacterized protein from Haemophilus influenzae (strain ATCC 51907 / DSM 11121 / KW20 / Rd).